Consider the following 338-residue polypeptide: Galactinol synthase 2 (338 aa).

Lys105 is a catalytic residue. Mn(2+) is bound by residues Asp121, Asp123, and His258.

It belongs to the glycosyltransferase 8 family. Galactosyltransferase subfamily. The cofactor is a divalent metal cation.

The protein resides in the cytoplasm. The enzyme catalyses myo-inositol + UDP-alpha-D-galactose = alpha-D-galactosyl-(1-&gt;3)-1D-myo-inositol + UDP + H(+). In terms of biological role, galactinol synthase involved in the biosynthesis of raffinose family oligosaccharides (RFOs) that function as osmoprotectants. May promote plant stress tolerance. This Solanum lycopersicum (Tomato) protein is Galactinol synthase 2 (GOLS2).